We begin with the raw amino-acid sequence, 242 residues long: Mediator of RNA polymerase II transcription subunit 19-A (242 aa).

Positions 1-15 (MTEIFSTLFGQNDAQ) are enriched in polar residues. 2 disordered regions span residues 1 to 33 (MTEIFSTLFGQNDAQPPSGPAALGFAPGKPPPS) and 171 to 242 (PPKK…NSLR). Residues 171-184 (PPKKKSKHKHRHHH) are compositionally biased toward basic residues. Residues 193–210 (TRTDPTKKKKKKDNEPER) show a composition bias toward basic and acidic residues. Positions 211-223 (RKKKKDKKKKKNR) are enriched in basic residues. The segment covering 232 to 242 (TGSQPNSNSLR) has biased composition (polar residues).

Belongs to the Mediator complex subunit 19 family. In terms of assembly, component of the Mediator complex.

It localises to the nucleus. Component of the Mediator complex, a coactivator involved in the regulated transcription of nearly all RNA polymerase II-dependent genes. Mediator functions as a bridge to convey information from gene-specific regulatory proteins to the basal RNA polymerase II transcription machinery. Mediator is recruited to promoters by direct interactions with regulatory proteins and serves as a scaffold for the assembly of a functional preinitiation complex with RNA polymerase II and the general transcription factors. This chain is Mediator of RNA polymerase II transcription subunit 19-A (med19a), found in Danio rerio (Zebrafish).